The primary structure comprises 218 residues: Large ribosomal subunit protein uL3 (218 aa).

A disordered region spans residues 137 to 157 (GVGASHGAHKNHRKPGSIGGA).

This sequence belongs to the universal ribosomal protein uL3 family. Part of the 50S ribosomal subunit. Forms a cluster with proteins L14 and L19.

In terms of biological role, one of the primary rRNA binding proteins, it binds directly near the 3'-end of the 23S rRNA, where it nucleates assembly of the 50S subunit. The sequence is that of Large ribosomal subunit protein uL3 from Kocuria rhizophila (strain ATCC 9341 / DSM 348 / NBRC 103217 / DC2201).